The following is a 233-amino-acid chain: Orotidine 5'-phosphate decarboxylase (233 aa).

Substrate is bound by residues Asp11, Lys34, 61–70 (DLKLHDIPNT), Thr117, Arg179, Gln189, Gly209, and Arg210. Residue Lys63 is the Proton donor of the active site.

This sequence belongs to the OMP decarboxylase family. Type 1 subfamily. In terms of assembly, homodimer.

It carries out the reaction orotidine 5'-phosphate + H(+) = UMP + CO2. It participates in pyrimidine metabolism; UMP biosynthesis via de novo pathway; UMP from orotate: step 2/2. Its function is as follows. Catalyzes the decarboxylation of orotidine 5'-monophosphate (OMP) to uridine 5'-monophosphate (UMP). In Streptococcus agalactiae serotype Ia (strain ATCC 27591 / A909 / CDC SS700), this protein is Orotidine 5'-phosphate decarboxylase.